A 97-amino-acid chain; its full sequence is Putative septation protein SpoVG (97 aa).

It belongs to the SpoVG family.

In terms of biological role, essential for sporulation. Interferes with or is a negative regulator of the pathway leading to asymmetric septation. The polypeptide is Putative septation protein SpoVG (Bacillus licheniformis (strain ATCC 14580 / DSM 13 / JCM 2505 / CCUG 7422 / NBRC 12200 / NCIMB 9375 / NCTC 10341 / NRRL NRS-1264 / Gibson 46)).